Reading from the N-terminus, the 399-residue chain is L-2-hydroxyglutarate dehydrogenase (399 aa).

Belongs to the L2HGDH family. FAD serves as cofactor.

It catalyses the reaction (S)-2-hydroxyglutarate + A = 2-oxoglutarate + AH2. Its function is as follows. Catalyzes the dehydrogenation of L-2-hydroxyglutarate (L2HG or(S)-2-hydroxyglutarate) to 2-oxoglutarate (alpha-ketoglutarate). Active in vitro with the artificial electron acceptor 2,6-dichlorophenolindophenol (DCPIP). Also displays a very low oxidase activity in vitro on L-2-hydroxyglutarate with O2 as the electron acceptor, but this activity is most likely not physiological. This chain is L-2-hydroxyglutarate dehydrogenase, found in Indibacter alkaliphilus (strain CCUG 57479 / KCTC 22604 / LW1).